The chain runs to 40 residues: Muscarinic m1-toxin3 (40 aa).

Residues Cys-3 and Cys-24 are joined by a disulfide bond.

Belongs to the three-finger toxin family. Short-chain subfamily. Aminergic toxin sub-subfamily. Monomer. Contains 4 disulfide bonds. Expressed by the venom gland.

The protein localises to the secreted. Functionally, binds irreversibly and specifically to M1 (CHRM1) muscarinic acetylcholine receptors, blocking further binding of antagonists and preventing the action of agonists. This is Muscarinic m1-toxin3 from Dendroaspis angusticeps (Eastern green mamba).